The sequence spans 238 residues: Small ribosomal subunit protein eS4 (238 aa).

The S4 RNA-binding domain occupies 38–110; sequence LPLAIIIRDV…EKKYYALIPI (73 aa).

Belongs to the eukaryotic ribosomal protein eS4 family.

This is Small ribosomal subunit protein eS4 from Pyrobaculum islandicum (strain DSM 4184 / JCM 9189 / GEO3).